Reading from the N-terminus, the 211-residue chain is AIACAAAPGLRGPSAFNGAALSTPAKSSSAMKMSFESEIGAQAPLGFWDPLGLLADADQERFERLRYVEVKHGRIAMLAIAGHLTQQNTRLPGMLSNSANLSFADMPNGVAALSKIPPGGLAQIFGFIGFLELAVMKNVEGSFPGDFIIGGNPFASSWDSMSSETQASKRAIELNNGRAAQMGILGMMVHEELSNQPYITNDLLGASYTFN.

The transit peptide at 1–33 (AIACAAAPGLRGPSAFNGAALSTPAKSSSAMKM) directs the protein to the chloroplast. 3 helical membrane passes run 75 to 95 (IAML…PGML), 116 to 136 (IPPG…LAVM), and 177 to 197 (GRAA…SNQP).

The protein belongs to the fucoxanthin chlorophyll protein family. In terms of assembly, the LHC complex of chromophytic algae is composed of fucoxanthin, chlorophyll A and C bound non-covalently by fucoxanthin chlorophyll proteins (FCPs). The ratio of pigments in this LHC is; fucoxanthin: chlorophyll C: chlorophyll A; (0.6-1): (0.1-0.3): (1).

It localises to the plastid. The protein localises to the chloroplast thylakoid membrane. The light-harvesting complex (LHC) functions as a light receptor, it captures and delivers excitation energy to photosystems with which it is closely associated. Energy is transferred from the carotenoid and chlorophyll C (or B) to chlorophyll A and the photosynthetic reaction centers where it is used to synthesize ATP and reducing power. The polypeptide is Fucoxanthin-chlorophyll a-c binding protein F, chloroplastic (FCPF) (Macrocystis pyrifera (Giant kelp)).